A 124-amino-acid polypeptide reads, in one-letter code: Fluoride-specific ion channel FluC (124 aa).

4 consecutive transmembrane segments (helical) span residues Phe6–Val26, Phe34–Ala54, Ala69–Leu89, and Phe101–Leu121. Residues Gly76 and Thr79 each contribute to the Na(+) site.

This sequence belongs to the fluoride channel Fluc/FEX (TC 1.A.43) family.

It is found in the cell inner membrane. It carries out the reaction fluoride(in) = fluoride(out). With respect to regulation, na(+) is not transported, but it plays an essential structural role and its presence is essential for fluoride channel function. In terms of biological role, fluoride-specific ion channel. Important for reducing fluoride concentration in the cell, thus reducing its toxicity. The chain is Fluoride-specific ion channel FluC from Stutzerimonas stutzeri (strain A1501) (Pseudomonas stutzeri).